The primary structure comprises 330 residues: DNA-directed RNA polymerase subunit alpha (330 aa).

The interval methionine 1–glutamate 231 is alpha N-terminal domain (alpha-NTD). Residues methionine 253–glutamate 330 are alpha C-terminal domain (alpha-CTD).

It belongs to the RNA polymerase alpha chain family. In terms of assembly, homodimer. The RNAP catalytic core consists of 2 alpha, 1 beta, 1 beta' and 1 omega subunit. When a sigma factor is associated with the core the holoenzyme is formed, which can initiate transcription.

The enzyme catalyses RNA(n) + a ribonucleoside 5'-triphosphate = RNA(n+1) + diphosphate. Functionally, DNA-dependent RNA polymerase catalyzes the transcription of DNA into RNA using the four ribonucleoside triphosphates as substrates. This is DNA-directed RNA polymerase subunit alpha from Phocaeicola vulgatus (strain ATCC 8482 / DSM 1447 / JCM 5826 / CCUG 4940 / NBRC 14291 / NCTC 11154) (Bacteroides vulgatus).